The primary structure comprises 521 residues: Bifunctional purine biosynthesis protein PurH (521 aa).

The region spanning 1–145 (MIKQALISVS…KNHRDVTVVV (145 aa)) is the MGS-like domain.

Belongs to the PurH family.

The catalysed reaction is (6R)-10-formyltetrahydrofolate + 5-amino-1-(5-phospho-beta-D-ribosyl)imidazole-4-carboxamide = 5-formamido-1-(5-phospho-D-ribosyl)imidazole-4-carboxamide + (6S)-5,6,7,8-tetrahydrofolate. The enzyme catalyses IMP + H2O = 5-formamido-1-(5-phospho-D-ribosyl)imidazole-4-carboxamide. Its pathway is purine metabolism; IMP biosynthesis via de novo pathway; 5-formamido-1-(5-phospho-D-ribosyl)imidazole-4-carboxamide from 5-amino-1-(5-phospho-D-ribosyl)imidazole-4-carboxamide (10-formyl THF route): step 1/1. It functions in the pathway purine metabolism; IMP biosynthesis via de novo pathway; IMP from 5-formamido-1-(5-phospho-D-ribosyl)imidazole-4-carboxamide: step 1/1. This is Bifunctional purine biosynthesis protein PurH from Paraburkholderia phytofirmans (strain DSM 17436 / LMG 22146 / PsJN) (Burkholderia phytofirmans).